The following is a 93-amino-acid chain: Probable chloroethene reductive dehalogenase membrane anchor protein (93 aa).

3 consecutive transmembrane segments (helical) span residues 3–23 (AIYF…FTWF), 35–55 (WVLG…TYAS), and 64–84 (SAWI…LFAA).

Belongs to the PceB family.

Its subcellular location is the cell membrane. In terms of biological role, may act as a membrane anchor for the chloroethene reductive dehalogenase VcrA. The sequence is that of Probable chloroethene reductive dehalogenase membrane anchor protein from Dehalococcoides mccartyi (strain VS).